The sequence spans 141 residues: Large ribosomal subunit protein uL22 (141 aa).

This sequence belongs to the universal ribosomal protein uL22 family. Part of the 50S ribosomal subunit.

Its function is as follows. This protein binds specifically to 23S rRNA; its binding is stimulated by other ribosomal proteins, e.g. L4, L17, and L20. It is important during the early stages of 50S assembly. It makes multiple contacts with different domains of the 23S rRNA in the assembled 50S subunit and ribosome. In terms of biological role, the globular domain of the protein is located near the polypeptide exit tunnel on the outside of the subunit, while an extended beta-hairpin is found that lines the wall of the exit tunnel in the center of the 70S ribosome. The sequence is that of Large ribosomal subunit protein uL22 from Frankia casuarinae (strain DSM 45818 / CECT 9043 / HFP020203 / CcI3).